A 589-amino-acid chain; its full sequence is Kelch-like protein 25 (589 aa).

One can recognise a BTB domain in the interval 46–114; that stretch reads TDVTLWAGDR…AYSSRIVINE (69 aa). One can recognise a BACK domain in the interval 149 to 250; sequence CLGMMVLSDA…LPSDCLKKAV (102 aa). Kelch repeat units lie at residues 296–340, 341–388, 389–444, 446–492, 493–538, and 539–585; these read TLLI…AIGC, KVYV…ELEN, CLYV…SAKL, LFVF…VLGS, QIFI…ASGN, and KLYV…STWK.

Component of the BCR(KLHL25) E3 ubiquitin ligase complex, at least composed of CUL3, KLHL25 and RBX1.

The protein operates within protein modification; protein ubiquitination. Functionally, substrate-specific adapter of a BCR (BTB-CUL3-RBX1) E3 ubiquitin ligase complex involved in various processes, such as translation homeostasis and lipid synthesis. The BCR(KLHL25) ubiquitin ligase complex acts by mediating ubiquitination of hypophosphorylated EIF4EBP1 (4E-BP1): ubiquitination and subsequent degradation of hypophosphorylated EIF4EBP1 (4E-BP1) probably serves as a homeostatic mechanism to maintain translation and prevent eIF4E inhibition when eIF4E levels are low. The BCR(KLHL25) complex does not target EIF4EBP1 (4E-BP1) when it is hyperphosphorylated or associated with eIF4E. The BCR(KLHL25) complex also acts as a regulator of lipid synthesis by mediating ubiquitination and degradation of ACLY, thereby inhibiting lipid synthesis. BCR(KLHL25)-mediated degradation of ACLY promotes fatty acid oxidation and is required for differentiation of inducible regulatory T (iTreg) cells. The chain is Kelch-like protein 25 from Rattus norvegicus (Rat).